Here is a 210-residue protein sequence, read N- to C-terminus: Tetraspanin-31 (210 aa).

Residues 1-12 (MVCGGFACSKNA) lie on the Cytoplasmic side of the membrane. The helical transmembrane segment at 13 to 33 (LCALNVVYMLVSLLLIGVAAW) threads the bilayer. The Extracellular segment spans residues 34 to 44 (GKGLGLVSSIH). The chain crosses the membrane as a helical span at residues 45-65 (IIGGVIAVGVFLLLIAVAGLV). Over 66–72 (GAVNHHQ) the chain is Cytoplasmic. Residues 73 to 93 (VLLFFYMIILGLVFIFQFVIS) form a helical membrane-spanning segment. The Extracellular portion of the chain corresponds to 94–173 (CSCLAINRSK…FLKHSDEALK (80 aa)). 4 N-linked (GlcNAc...) asparagine glycosylation sites follow: N100, N109, N117, and N134. The helical transmembrane segment at 174–194 (ILGGVGLFFSFTEILGVWLAM) threads the bilayer. The Cytoplasmic segment spans residues 195–210 (RFRNQKDPRANPSAFL).

It belongs to the tetraspanin (TM4SF) family.

It is found in the membrane. This chain is Tetraspanin-31 (TSPAN31), found in Homo sapiens (Human).